The chain runs to 341 residues: tRNA N6-adenosine threonylcarbamoyltransferase (341 aa).

Fe cation contacts are provided by His-111 and His-115. Substrate is bound by residues 134–138, Asp-167, Gly-180, and Asn-272; that span reads LVSGG. Residue Asp-300 coordinates Fe cation.

It belongs to the KAE1 / TsaD family. Fe(2+) is required as a cofactor.

It localises to the cytoplasm. The catalysed reaction is L-threonylcarbamoyladenylate + adenosine(37) in tRNA = N(6)-L-threonylcarbamoyladenosine(37) in tRNA + AMP + H(+). Its function is as follows. Required for the formation of a threonylcarbamoyl group on adenosine at position 37 (t(6)A37) in tRNAs that read codons beginning with adenine. Is involved in the transfer of the threonylcarbamoyl moiety of threonylcarbamoyl-AMP (TC-AMP) to the N6 group of A37, together with TsaE and TsaB. TsaD likely plays a direct catalytic role in this reaction. This Psychromonas ingrahamii (strain DSM 17664 / CCUG 51855 / 37) protein is tRNA N6-adenosine threonylcarbamoyltransferase.